The following is a 211-amino-acid chain: B3 domain-containing protein At5g42700 (211 aa).

The segment at residues 110-201 is a DNA-binding region (TF-B3); it reads FVKSMLQSHV…AFKVYITRVG (92 aa).

It localises to the nucleus. This Arabidopsis thaliana (Mouse-ear cress) protein is B3 domain-containing protein At5g42700.